A 95-amino-acid chain; its full sequence is Co-chaperonin GroES (95 aa).

Belongs to the GroES chaperonin family. In terms of assembly, heptamer of 7 subunits arranged in a ring. Interacts with the chaperonin GroEL.

It localises to the cytoplasm. Functionally, together with the chaperonin GroEL, plays an essential role in assisting protein folding. The GroEL-GroES system forms a nano-cage that allows encapsulation of the non-native substrate proteins and provides a physical environment optimized to promote and accelerate protein folding. GroES binds to the apical surface of the GroEL ring, thereby capping the opening of the GroEL channel. The polypeptide is Co-chaperonin GroES (Streptococcus thermophilus (strain ATCC BAA-491 / LMD-9)).